The chain runs to 370 residues: Cytochrome b (370 aa).

Transmembrane regions (helical) follow at residues 25-45, 69-90, 105-125, and 170-190; these read FGSMLLTCSALQVLTGFFLAV, WMMQNLHAMGASMFFICIYIHI, WLSGTTLLIMLMATAFFGYVL, and FFALHFILPFGIISFSSLHVM. Heme b-binding residues include H75 and H89. Residues H174 and H188 each contribute to the heme b site. H193 lines the a ubiquinone pocket. 4 helical membrane passes run 218 to 238, 280 to 300, 312 to 332, and 339 to 358; these read YKDLFMLSVMITLLLTMISFY, LGGALALAMSIMILLTMPFTH, FMQLMFWTFAATFLVITWTAT, and FTMISQVAALIYFLFFISNP.

It belongs to the cytochrome b family. As to quaternary structure, the cytochrome bc1 complex contains 3 respiratory subunits (MT-CYB, CYC1 and UQCRFS1), 2 core proteins (UQCRC1 and UQCRC2) and probably 6 low-molecular weight proteins. Heme b serves as cofactor.

It is found in the mitochondrion inner membrane. Component of the ubiquinol-cytochrome c reductase complex (complex III or cytochrome b-c1 complex) that is part of the mitochondrial respiratory chain. The b-c1 complex mediates electron transfer from ubiquinol to cytochrome c. Contributes to the generation of a proton gradient across the mitochondrial membrane that is then used for ATP synthesis. The polypeptide is Cytochrome b (MT-CYB) (Corallus hortulanus enydris (Garden tree boa)).